Consider the following 78-residue polypeptide: Large ribosomal subunit protein bL28 (78 aa).

Belongs to the bacterial ribosomal protein bL28 family.

This chain is Large ribosomal subunit protein bL28, found in Colwellia psychrerythraea (strain 34H / ATCC BAA-681) (Vibrio psychroerythus).